Reading from the N-terminus, the 293-residue chain is Transcriptional regulator ICP22 homolog (293 aa).

Disordered stretches follow at residues 1-49 (MPHG…QRID) and 175-293 (RFLE…SARR). Over residues 21 to 31 (TPSTSPLIPSL) the composition is skewed to low complexity. The segment covering 190–210 (EECDVSGDESPSEEEEEDEAS) has biased composition (acidic residues). The span at 272 to 281 (AAKKRRKRQP) shows a compositional bias: basic residues. Residues 282–293 (PKGERPTKSARR) show a composition bias toward basic and acidic residues.

Belongs to the herpesviridae ICP22 family.

This Equus caballus (Horse) protein is Transcriptional regulator ICP22 homolog (IR4).